The following is a 674-amino-acid chain: Translation factor GUF1, mitochondrial (674 aa).

The transit peptide at 1–48 directs the protein to the mitochondrion; sequence MRGCLQPARWLTTATLRRPLLSCPRQLPTRYNPFPRPFHHAPVLQARQ. Positions 66–246 constitute a tr-type G domain; the sequence is ERYRNFCIVA…AIIESIPALL (181 aa). Residues 75–82, 139–143, and 193–196 contribute to the GTP site; these read AHVDHGKS, DTPGH, and NKVD.

Belongs to the TRAFAC class translation factor GTPase superfamily. Classic translation factor GTPase family. LepA subfamily.

The protein resides in the mitochondrion inner membrane. It carries out the reaction GTP + H2O = GDP + phosphate + H(+). Its function is as follows. Promotes mitochondrial protein synthesis. May act as a fidelity factor of the translation reaction, by catalyzing a one-codon backward translocation of tRNAs on improperly translocated ribosomes. Binds to mitochondrial ribosomes in a GTP-dependent manner. The sequence is that of Translation factor GUF1, mitochondrial from Arthroderma otae (strain ATCC MYA-4605 / CBS 113480) (Microsporum canis).